The sequence spans 1072 residues: DNA-directed RNA polymerase subunit beta (1072 aa).

This sequence belongs to the RNA polymerase beta chain family. In terms of assembly, in plastids the minimal PEP RNA polymerase catalytic core is composed of four subunits: alpha, beta, beta', and beta''. When a (nuclear-encoded) sigma factor is associated with the core the holoenzyme is formed, which can initiate transcription.

The protein resides in the plastid. It localises to the chloroplast. It catalyses the reaction RNA(n) + a ribonucleoside 5'-triphosphate = RNA(n+1) + diphosphate. Its function is as follows. DNA-dependent RNA polymerase catalyzes the transcription of DNA into RNA using the four ribonucleoside triphosphates as substrates. The sequence is that of DNA-directed RNA polymerase subunit beta from Cycas taitungensis (Prince sago).